Reading from the N-terminus, the 123-residue chain is Iron-sulfur cluster insertion protein ErpA (123 aa).

Residues Cys-51, Cys-115, and Cys-117 each coordinate iron-sulfur cluster.

The protein belongs to the HesB/IscA family. As to quaternary structure, homodimer. Iron-sulfur cluster serves as cofactor.

In terms of biological role, required for insertion of 4Fe-4S clusters for at least IspG. The polypeptide is Iron-sulfur cluster insertion protein ErpA (Halorhodospira halophila (strain DSM 244 / SL1) (Ectothiorhodospira halophila (strain DSM 244 / SL1))).